The primary structure comprises 231 residues: Cell cycle transcriptional regulator CtrA (231 aa).

In terms of domain architecture, Response regulatory spans 2–116 (RVLLIEDDSA…EMIARIHAVV (115 aa)). Residue D51 is modified to 4-aspartylphosphate. Residues 124–223 (QSVIKTGDIV…VWGRGYVLRD (100 aa)) constitute a DNA-binding region (ompR/PhoB-type).

Phosphorylated by CckA.

Forms part of a two-component regulatory system CtrA/CckA that controls multiple events in the cell cycle, including cell division, stalk synthesis and cell cycle-specific transcription. Binds to a group of cell cycle-regulated promoters critical for DNA replication, DNA methylation, and class II flagellar biogenesis. This is Cell cycle transcriptional regulator CtrA (ctrA) from Caulobacter vibrioides (strain ATCC 19089 / CIP 103742 / CB 15) (Caulobacter crescentus).